A 300-amino-acid chain; its full sequence is MEGNIVSGKAVADNITNILATCISDLKAQHNLTPCLIVVLVGDDPASQLYVRNKQRKAEMLGLRSETMLLPSTISESSLIEKIHQLNNDDSVHGILVQLPVPRHIDKNLIINTIDPKKDVDGFHNENVGRLFTGQKKNCLVPCTPQGCLYLIKTITRNLSGSDAVVIGRSNIVGKPMACLLLGENCTVTTVHSATRDLPDYCRRADILVAAVGIPRFVKYSWVKHGAIVIDVGINSIEEDGVKKFVGDVDFAEVNKIASAITPVPGGVGPMTIAFLMVNTIIAACNQSGIDGFLEKYLDL.

Residues 168-170, Ser193, and Ile234 each bind NADP(+); that span reads GRS.

The protein belongs to the tetrahydrofolate dehydrogenase/cyclohydrolase family. As to quaternary structure, homodimer.

It carries out the reaction (6R)-5,10-methylene-5,6,7,8-tetrahydrofolate + NADP(+) = (6R)-5,10-methenyltetrahydrofolate + NADPH. The enzyme catalyses (6R)-5,10-methenyltetrahydrofolate + H2O = (6R)-10-formyltetrahydrofolate + H(+). It participates in one-carbon metabolism; tetrahydrofolate interconversion. Functionally, catalyzes the oxidation of 5,10-methylenetetrahydrofolate to 5,10-methenyltetrahydrofolate and then the hydrolysis of 5,10-methenyltetrahydrofolate to 10-formyltetrahydrofolate. The sequence is that of Bifunctional protein FolD from Ehrlichia ruminantium (strain Welgevonden).